Consider the following 307-residue polypeptide: UDP-N-acetylenolpyruvoylglucosamine reductase (307 aa).

The region spanning 33 to 198 (KVGGPVDILV…LEAILKLSLG (166 aa)) is the FAD-binding PCMH-type domain. Arg177 is an active-site residue. Ser227 functions as the Proton donor in the catalytic mechanism. Glu297 is a catalytic residue.

This sequence belongs to the MurB family. FAD is required as a cofactor.

The protein localises to the cytoplasm. It catalyses the reaction UDP-N-acetyl-alpha-D-muramate + NADP(+) = UDP-N-acetyl-3-O-(1-carboxyvinyl)-alpha-D-glucosamine + NADPH + H(+). It functions in the pathway cell wall biogenesis; peptidoglycan biosynthesis. In terms of biological role, cell wall formation. This chain is UDP-N-acetylenolpyruvoylglucosamine reductase, found in Clostridium tetani (strain Massachusetts / E88).